Here is a 397-residue protein sequence, read N- to C-terminus: Major outer membrane porin, serovar L3 (397 aa).

The signal sequence occupies residues 1-22; that stretch reads MKKLLKSVLVFAALSSASSLQA.

Belongs to the chlamydial porin (CP) (TC 1.B.2) family. As to quaternary structure, part of a disulfide cross-linked outer membrane complex (COMC) composed of the major outer membrane porin (MOMP), the small cysteine-rich protein (OmcA) and the large cysteine-rich periplasmic protein (OmcB).

The protein localises to the cell outer membrane. In elementary bodies (EBs, the infectious stage, which is able to survive outside the host cell) provides the structural integrity of the outer envelope through disulfide cross-links with the small cysteine-rich protein and the large cysteine-rich periplasmic protein. It has been described in publications as the Sarkosyl-insoluble COMC (Chlamydia outer membrane complex), and serves as the functional equivalent of peptidoglycan. Its function is as follows. Permits diffusion of specific solutes through the outer membrane. The chain is Major outer membrane porin, serovar L3 (ompA) from Chlamydia trachomatis.